Consider the following 826-residue polypeptide: Zinc phosphodiesterase ELAC protein 2 (826 aa).

The N-terminal 16 residues, 1–16, are a transit peptide targeting the mitochondrion; the sequence is MWALCSLLRSATGRTM. Residues 15 to 27 show a composition bias toward polar residues; it reads TMSQGRTISQGSA. Disordered stretches follow at residues 15–53 and 187–231; these read TMSQ…GSSG and SEQR…VSQR. Ser-199, Ser-208, Ser-212, Ser-229, Ser-618, and Ser-736 each carry phosphoserine. Basic and acidic residues predominate over residues 208 to 224; sequence SPERSSDSESNESEPHL. The segment at 798 to 826 is disordered; it reads ALTDDLEDGEPQQKRAHTEEPQSKKVRAQ. The segment covering 808–820 has biased composition (basic and acidic residues); that stretch reads PQQKRAHTEEPQS.

Belongs to the RNase Z family. As to quaternary structure, homodimer. Interacts with PTCD1. The cofactor is Zn(2+).

It localises to the mitochondrion. Its subcellular location is the mitochondrion matrix. The protein localises to the mitochondrion nucleoid. The protein resides in the nucleus. The catalysed reaction is Endonucleolytic cleavage of RNA, removing extra 3' nucleotides from tRNA precursor, generating 3' termini of tRNAs. A 3'-hydroxy group is left at the tRNA terminus and a 5'-phosphoryl group is left at the trailer molecule.. Zinc phosphodiesterase, which displays mitochondrial tRNA 3'-processing endonuclease activity. Involved in tRNA maturation, by removing a 3'-trailer from precursor tRNA. Associates with mitochondrial DNA complexes at the nucleoids to initiate RNA processing and ribosome assembly. The sequence is that of Zinc phosphodiesterase ELAC protein 2 (ELAC2) from Macaca fascicularis (Crab-eating macaque).